The primary structure comprises 119 residues: Protein TusC (119 aa).

Belongs to the DsrF/TusC family. As to quaternary structure, heterohexamer, formed by a dimer of trimers. The hexameric TusBCD complex contains 2 copies each of TusB, TusC and TusD. The TusBCD complex interacts with TusE.

The protein resides in the cytoplasm. In terms of biological role, part of a sulfur-relay system required for 2-thiolation of 5-methylaminomethyl-2-thiouridine (mnm(5)s(2)U) at tRNA wobble positions. This Pectobacterium atrosepticum (strain SCRI 1043 / ATCC BAA-672) (Erwinia carotovora subsp. atroseptica) protein is Protein TusC.